Reading from the N-terminus, the 195-residue chain is MNPVYSPGSSGVPYANAKGIGYPAGFPMGYAAAAPAYSPNMYPGANPTFQTGYTPGTPYKVSCSPTSGAVPPYSSSPNPYQTAVYPVRSAYPQQSPYAQQGTYYTQPLYAAPPHVIHHTTVVQPNGMPATVYPAPIPPPRGNGVTMGMVAGTTMAMSAGTLLTAHSPTPVAPHPVTVPTYRAPGTPTYSYVPPQW.

The residue at position 1 (Met-1) is an N-acetylmethionine. Over 1–18 (MNPVYSPGSSGVPYANAK) the chain is Cytoplasmic. At Ser-6 the chain carries Phosphoserine. Residues 19 to 42 (GIGYPAGFPMGYAAAAPAYSPNMY) traverse the membrane as a helical segment. Topologically, residues 43–142 (PGANPTFQTG…PAPIPPPRGN (100 aa)) are extracellular. N-linked (GlcNAc...) asparagine glycosylation is present at Asn-46. Residues 143 to 164 (GVTMGMVAGTTMAMSAGTLLTA) form a helical membrane-spanning segment. At 165–195 (HSPTPVAPHPVTVPTYRAPGTPTYSYVPPQW) the chain is on the cytoplasmic side.

This sequence belongs to the FAM168 family. As to quaternary structure, may form homodimers. May interact with DAZAP2, FAM168A, PRDX6, RBM6, TMTC1 and YPEL2. Interacts with CDC27. In terms of processing, N-glycosylated. In terms of tissue distribution, expressed in the brain, within neuronal axonal fibers and associated with myelin sheets (at protein level). Expression tends to be lower in the brain of Alzheimer disease patients compared to healthy individuals (at protein level).

Its subcellular location is the cytoplasm. The protein localises to the perinuclear region. The protein resides in the cell membrane. It is found in the cell projection. It localises to the axon. Inhibitor of neuronal axonal outgrowth. Acts as a negative regulator of CDC42 and STAT3 and a positive regulator of STMN2. Positive regulator of CDC27. This is Myelin-associated neurite-outgrowth inhibitor (FAM168B) from Homo sapiens (Human).